Here is a 1804-residue protein sequence, read N- to C-terminus: Collagen alpha-1(XI) chain (1804 aa).

Residues 1–34 (MEPWSRWKTKRWIWDLTISTLVLTFLFQAREVRG) form the signal peptide. Positions 35–511 (AAPVDILKAL…SKGPTISAQE (477 aa)) are cleaved as a propeptide — N-terminal propeptide. Cystine bridges form between C60–C242 and C181–C235. The Laminin G-like domain maps to 70 to 242 (DIAYRVTEEA…DYCDHYSPDC (173 aa)). Residues 229 to 417 (KAAYDYCDHY…DFTETSINGH (189 aa)) are nonhelical region. N351 is a glycosylation site (N-linked (GlcNAc...) asparagine). Residues 418-506 (GAYGEKGQKG…YGGDGSKGPT (89 aa)) form a triple-helical region (interrupted) region. Residues 437–506 (LVEGPPGPAG…YGGDGSKGPT (70 aa)) form a disordered region. The 49-residue stretch at 440–488 (GPPGPAGPAGLMGPPGLQGPSGLPGDPGDRGPPGRPGLPGADGLPGPPG) folds into the Collagen-like 1 domain. Composition is skewed to low complexity over residues 447–465 (PAGLMGPPGLQGPSGLPGD) and 477–494 (LPGADGLPGPPGTMLMLP). The segment at 507–509 (ISA) is short nonhelical segment. The interval 510-527 (QEAQAQAILQQARIALRG) is telopeptide. The segment at 526 to 1560 (RGPPGPMGLT…KTRRHTESIQ (1035 aa)) is disordered. The segment at 528 to 1540 (PPGPMGLTGR…PGPPGPPGEV (1013 aa)) is triple-helical region. Collagen-like domains follow at residues 530-584 (GPMG…GADG), 581-639 (GADG…EIGP), 607-664 (PGDK…PGQP), and 641-698 (GLPG…GPQG). Composition is skewed to gly residues over residues 539-548 (GPVGGPGSAG) and 581-590 (GADGGRGMPG). Allysine is present on K610. Residues 639–655 (PRGLPGEAGPRGLLGPR) show a composition bias toward low complexity. The span at 697–708 (QGLPGPQGPIGP) shows a compositional bias: pro residues. The segment covering 715-726 (QGKPGLAGLPGA) has biased composition (low complexity). Residues 746–804 (GPPGPQGPIGYPGPRGVKGADGVRGLKGSKGEKGEDGFPGFKGDMGLKGDRGEVGQVGP) form the Collagen-like 6 domain. The span at 805 to 814 (RGEDGPEGPK) shows a compositional bias: basic and acidic residues. 3 stretches are compositionally biased toward low complexity: residues 873-901 (KPGPRGQRGPTGPRGSRGARGPTGKPGPK), 916-925 (RGPQGPQGPV), and 969-979 (PQGPTGETGPI). Residues 1040–1049 (GLKGGEGPQG) are compositionally biased toward gly residues. Pro residues predominate over residues 1074–1083 (RPGPQGPPGP). Positions 1084-1108 (AGEKGAPGEKGPQGPAGRDGVQGPV) are enriched in low complexity. Residues 1160–1169 (GIAGGDGEAG) are compositionally biased toward gly residues. Composition is skewed to pro residues over residues 1216–1227 (MGPPGPPGPRGP) and 1341–1360 (QPGPPGPSGEAGPPGPPGKR). 2 stretches are compositionally biased toward low complexity: residues 1383 to 1392 (AEGPPGKTGP) and 1417 to 1426 (QGLPGAAGQD). 3 consecutive Collagen-like domains span residues 1391-1449 (GPVG…SKGE), 1442-1492 (GDPG…PGPA), and 1481-1539 (GAKG…PPGE). Residues 1428–1437 (PPGPLGPPGL) show a composition bias toward pro residues. K1450 is subject to Allysine. The span at 1453–1462 (PGLIGLIGPP) shows a compositional bias: low complexity. Residues 1481–1490 (GAKGDGGIPG) show a composition bias toward gly residues. Positions 1491–1507 (PAGPIGPPGPPGLPGPA) are enriched in pro residues. Residues 1509–1519 (PKGNKGSSGPT) are compositionally biased toward low complexity. Over residues 1528–1537 (PGPPGPPGPP) the composition is skewed to pro residues. A nonhelical region (C-terminal) region spans residues 1541–1561 (IQPLPILSPKKTRRHTESIQA). The propeptide at 1562–1804 (DAGDNILDYS…FEVGPACFLG (243 aa)) is C-terminal propeptide. In terms of domain architecture, Fibrillar collagen NC1 spans 1575 to 1803 (EEIFGSLNSL…GFEVGPACFL (229 aa)). An intrachain disulfide couples C1605 to C1637. 5 residues coordinate Ca(2+): D1623, N1625, Q1626, C1628, and D1631. N1638 and N1707 each carry an N-linked (GlcNAc...) asparagine glycan. Disulfide bonds link C1646–C1801 and C1712–C1755.

It belongs to the fibrillar collagen family. Trimers composed of three different chains: alpha 1(XI), alpha 2(XI), and alpha 3(XI). Alpha 3(XI) is probably a post-translational modification of alpha 1(II). Post-translationally, prolines at the third position of the tripeptide repeating unit (G-X-Y) are hydroxylated in some or all of the chains. N-glycosylated.

The protein resides in the secreted. Its subcellular location is the extracellular space. It localises to the extracellular matrix. Functionally, may play an important role in fibrillogenesis by controlling lateral growth of collagen II fibrils. This is Collagen alpha-1(XI) chain (Col11a1) from Rattus norvegicus (Rat).